The chain runs to 321 residues: tRNA-dihydrouridine synthase B (321 aa).

FMN contacts are provided by residues 16 to 18 (PMA) and Q70. C100 (proton donor) is an active-site residue. Residues K139, 200–202 (NGD), and 224–225 (GR) each bind FMN.

The protein belongs to the Dus family. DusB subfamily. It depends on FMN as a cofactor.

It carries out the reaction a 5,6-dihydrouridine in tRNA + NAD(+) = a uridine in tRNA + NADH + H(+). It catalyses the reaction a 5,6-dihydrouridine in tRNA + NADP(+) = a uridine in tRNA + NADPH + H(+). In terms of biological role, catalyzes the synthesis of 5,6-dihydrouridine (D), a modified base found in the D-loop of most tRNAs, via the reduction of the C5-C6 double bond in target uridines. In Salmonella typhi, this protein is tRNA-dihydrouridine synthase B.